A 1215-amino-acid polypeptide reads, in one-letter code: DNA-directed RNA polymerase subunit beta' (1215 aa).

Zn(2+) contacts are provided by Cys-60, Cys-62, Cys-75, and Cys-78. The Mg(2+) site is built by Asp-449, Asp-451, and Asp-453. Cys-818, Cys-892, Cys-899, and Cys-902 together coordinate Zn(2+).

The protein belongs to the RNA polymerase beta' chain family. As to quaternary structure, the RNAP catalytic core consists of 2 alpha, 1 beta, 1 beta' and 1 omega subunit. When a sigma factor is associated with the core the holoenzyme is formed, which can initiate transcription. Mg(2+) serves as cofactor. Zn(2+) is required as a cofactor.

It carries out the reaction RNA(n) + a ribonucleoside 5'-triphosphate = RNA(n+1) + diphosphate. In terms of biological role, DNA-dependent RNA polymerase catalyzes the transcription of DNA into RNA using the four ribonucleoside triphosphates as substrates. In Limosilactobacillus fermentum (strain NBRC 3956 / LMG 18251) (Lactobacillus fermentum), this protein is DNA-directed RNA polymerase subunit beta'.